The chain runs to 79 residues: Large ribosomal subunit protein uL22 (79 aa).

Belongs to the universal ribosomal protein uL22 family. As to quaternary structure, part of the 50S ribosomal subunit.

In terms of biological role, this protein binds specifically to 23S rRNA; its binding is stimulated by other ribosomal proteins, e.g. L4, L17, and L20. It is important during the early stages of 50S assembly. It makes multiple contacts with different domains of the 23S rRNA in the assembled 50S subunit and ribosome. The globular domain of the protein is located near the polypeptide exit tunnel on the outside of the subunit, while an extended beta-hairpin is found that lines the wall of the exit tunnel in the center of the 70S ribosome. This chain is Large ribosomal subunit protein uL22 (rplV), found in Clover proliferation phytoplasma.